The following is a 513-amino-acid chain: Beta-glucosidase 5 (513 aa).

Positions 1 to 26 (MAAAIAVVYLSLLLLLLHGAAPAVLG) are cleaved as a signal peptide. Gln46 is a binding site for a beta-D-glucoside. Glu192 functions as the Proton donor in the catalytic mechanism. The cysteines at positions 211 and 220 are disulfide-linked. N-linked (GlcNAc...) asparagine glycans are attached at residues Asn224 and Asn273. A beta-D-glucoside-binding residues include Tyr336 and Glu405. Residue Glu405 is the Nucleophile of the active site. N-linked (GlcNAc...) asparagine glycosylation occurs at Asn412. A beta-D-glucoside is bound by residues Trp447, 454-455 (EY), and Tyr463.

The protein belongs to the glycosyl hydrolase 1 family.

It carries out the reaction Hydrolysis of terminal, non-reducing beta-D-glucosyl residues with release of beta-D-glucose.. This is Beta-glucosidase 5 (BGLU5) from Oryza sativa subsp. japonica (Rice).